We begin with the raw amino-acid sequence, 281 residues long: MLSYHHSFHAGNHADVLKHIVLMLILENLKLKEKGFFYLDTHSGVGRYRLSSNESEKTGEYKEGIGRLWDQTDLPEDIARYVKMIKKLNYGGKELRYYAGSPLIAAELLRSQDRALLTELHPSDYPILRNNFSDDKNVTVKCDNGFQQVKATLPPKERRGLVLIDPPYELKDDYDLVVKAIEEGYKRFATGTYAIWYPVVLRQQTKRIFKGLEATGIRKILKIELAVRPDSDQRGMTASGMVVINPPWTLETQMKEILPYLTKTLVPEGTGSWTVEWITPE.

Residues H19, H42, S101, E119, 144–145 (NG), and D165 contribute to the S-adenosyl-L-methionine site. D165 serves as the catalytic Proton acceptor.

Belongs to the RlmJ family. In terms of assembly, monomer.

It carries out the reaction adenosine(2030) in 23S rRNA + S-adenosyl-L-methionine = N(6)-methyladenosine(2030) in 23S rRNA + S-adenosyl-L-homocysteine + H(+). Specifically methylates the adenine in position 2030 of 23S rRNA. This is Ribosomal RNA large subunit methyltransferase J from Haemophilus influenzae (strain ATCC 51907 / DSM 11121 / KW20 / Rd).